Reading from the N-terminus, the 272-residue chain is MNNRVHQGHFARKRFGQNFLNDHFVIDSIVSAIHPQPGQAVVEIGPGLGALTAPIGERMDRFTVIELDRDLAARLEKHPTLKDKLTIIQQDAMTIDFAALAEQAGQPLRVFGNLPYNISTPLMFHLFTYTQSIRDMHFMLQKEVVNRLVAGPNSKTFGRLSVMAQYYCQIIPVLEVPPEAFKPAPKVDSAVVRLVPHAELPYPVSDIRMLSRITTEAFNQRRKTLRNSLGNLFTPETLTELGINITSRAENVTVEQYCRLANWLSEHPAKQE.

S-adenosyl-L-methionine contacts are provided by Asn-18, Leu-20, Gly-45, Glu-66, Asp-91, and Asn-113.

The protein belongs to the class I-like SAM-binding methyltransferase superfamily. rRNA adenine N(6)-methyltransferase family. RsmA subfamily.

The protein localises to the cytoplasm. The catalysed reaction is adenosine(1518)/adenosine(1519) in 16S rRNA + 4 S-adenosyl-L-methionine = N(6)-dimethyladenosine(1518)/N(6)-dimethyladenosine(1519) in 16S rRNA + 4 S-adenosyl-L-homocysteine + 4 H(+). In terms of biological role, specifically dimethylates two adjacent adenosines (A1518 and A1519) in the loop of a conserved hairpin near the 3'-end of 16S rRNA in the 30S particle. May play a critical role in biogenesis of 30S subunits. The protein is Ribosomal RNA small subunit methyltransferase A of Pectobacterium atrosepticum (strain SCRI 1043 / ATCC BAA-672) (Erwinia carotovora subsp. atroseptica).